The chain runs to 162 residues: NADH-quinone oxidoreductase subunit I (162 aa).

4Fe-4S ferredoxin-type domains follow at residues leucine 52–glycine 82 and valine 93–asparagine 122. [4Fe-4S] cluster contacts are provided by cysteine 62, cysteine 65, cysteine 68, cysteine 72, cysteine 102, cysteine 105, cysteine 108, and cysteine 112.

The protein belongs to the complex I 23 kDa subunit family. NDH-1 is composed of 14 different subunits. Subunits NuoA, H, J, K, L, M, N constitute the membrane sector of the complex. [4Fe-4S] cluster is required as a cofactor.

The protein resides in the cell inner membrane. It catalyses the reaction a quinone + NADH + 5 H(+)(in) = a quinol + NAD(+) + 4 H(+)(out). NDH-1 shuttles electrons from NADH, via FMN and iron-sulfur (Fe-S) centers, to quinones in the respiratory chain. The immediate electron acceptor for the enzyme in this species is believed to be ubiquinone. Couples the redox reaction to proton translocation (for every two electrons transferred, four hydrogen ions are translocated across the cytoplasmic membrane), and thus conserves the redox energy in a proton gradient. This Afipia carboxidovorans (strain ATCC 49405 / DSM 1227 / KCTC 32145 / OM5) (Oligotropha carboxidovorans) protein is NADH-quinone oxidoreductase subunit I.